Reading from the N-terminus, the 77-residue chain is uncharacterized protein (77 aa).

This sequence to E.coli YdfK.

This is an uncharacterized protein from Escherichia coli (strain K12).